A 540-amino-acid chain; its full sequence is Zinc finger protein 768 (540 aa).

2 disordered regions span residues 1–166 and 239–258; these read MERE…FEAQ and TGALRGPGRRGGRARGGQGP. Phosphoserine is present on residues Ser17, Ser18, and Ser23. Tyr27 carries the phosphotyrosine modification. Ser33 carries the phosphoserine modification. Acidic residues predominate over residues 34–53; it reads ENEEEEISQQEGSGDYEVEE. Phosphoserine is present on residues Ser62, Ser69, Ser76, Ser83, Ser90, Ser97, Ser104, Ser107, Ser111, Ser118, and Ser125. Residues 62-77 show a composition bias toward low complexity; sequence SPGFEPQSPEFEPQSP. Positions 107–119 are enriched in polar residues; it reads SDSQSPEFESQSP. Tyr128 is subject to Phosphotyrosine. At Ser132 the chain carries Phosphoserine. The residue at position 135 (Tyr135) is a Phosphotyrosine. The residue at position 139 (Ser139) is a Phosphoserine. Tyr142 bears the Phosphotyrosine mark. Residues Ser144 and Ser147 each carry the phosphoserine modification. The span at 149 to 166 shows a compositional bias: polar residues; it reads YESQNTELKTQSPEFEAQ. Thr158 carries the phosphothreonine modification. Ser160 is subject to Phosphoserine. Residues 261 to 283 form a C2H2-type 1 zinc finger; it reads NICGICGKSFGRGSTLIQHQRIH. Thr284 is subject to Phosphothreonine. At Tyr289 the chain carries Phosphotyrosine. 4 consecutive C2H2-type zinc fingers follow at residues 289 to 311, 317 to 339, 345 to 367, and 373 to 395; these read YKCEVCSKAFSQSSDLIKHQRTH, YKCPRCGKAFADSSYLLRHQRTH, YKCPHCGKAFGDSSYLLRHQRTH, and YSCTECGKCYSQNSSLRSHQRVH. A phosphoserine mark is found at Ser295 and Ser299. Thr396 carries the phosphothreonine modification. C2H2-type zinc fingers lie at residues 401-423, 429-451, 457-479, 485-507, and 513-535; these read FSCGICGKSFSQRSALIPHARSH, FKCPECGKRFGQSSVLAIHARTH, YSCPDCGKTFNRSSTLIQHQRSH, YRCAVCGKGFCRSSTLLQHHRVH, and YKCDDCGKAFSQSSDLIRHQRTH. Ser442 bears the Phosphoserine mark.

Belongs to the krueppel C2H2-type zinc-finger protein family. In terms of assembly, interacts (via zinc-finger domains) with TP53 (via N-terminus); interaction might be facilitated by TP53 oligomerization state. Interacts with ELP3. In terms of processing, may be phosphorylated at residue 'Ser-5' of the tandem heptapeptide repeats in the N-terminus. Phosphorylation might be increased upon RAS pathway activation and negatively regulate protein stability.

It localises to the nucleus. The protein resides in the chromosome. Its function is as follows. Binds to mammalian-wide interspersed repeat (MIRs) sequences in euchromatin and promoter regions of genes at the consensus sequence 5'-GCTGTGTG-[N20]-CCTCTCTG-3', consisting of two anchor regions connected by a linker region; the linker region probably does not contribute to the binding specificity. Required for cell homeostasis. May be involved in transcriptional regulation. The polypeptide is Zinc finger protein 768 (ZNF768) (Homo sapiens (Human)).